Consider the following 632-residue polypeptide: MSGGSRIQLLSPRLANQIAAGEVVERPASVAKELLENSLDSGARRIEVEVEQGGVKLLRVRDNGGGIAPDDLPLALARHATSKIRELEDLEGVLSLGFRGEALASISSVARLTLTSRTADAGEAWQVETEGRDMTPRVQPAAHPVGTSVEVRDLFFNTPARRKFLKAEKTEFDHLQEVIRRLALARFDVGFHLRHNGKTIFSLHEATDEMARARRVGTICGPGFLEQALPIDVERNGLRLWGWVGLPTFSRSQADLQYFFVNGRAVRDKLVAHAVRQAYRDVLFNGRHPTFVLFLECDPTGVDVNVHPTKHEVRFREGRMVHDFLYGTLHRALADVRPEDQLAAPAAASEIVRPSGQQVGEFGPQGEMRLASPVLEQPQAEPRQSFTPGSGAGSGYQYQYTPRPSQPLPVAETQAVYREFYAPLDGTAPASLPESQGDIPPLGYALAQLKGIYILAENAVGLVLVDMHAAHERIMYERLKVAMASEGLSGQPLLVPESLALSQREADCAEEHAQWFQRLGFELQRLGPETVAIRQIPALLKQAEANRLVQDVLADLMEYGTSDRIQAHLNELLGTMACHGAVRANRRLAIPEMNALLRDMENTERSGQCNHGRPTWTQMGLDDLDKLFLRGR.

The tract at residues 376 to 397 (EQPQAEPRQSFTPGSGAGSGYQ) is disordered.

The protein belongs to the DNA mismatch repair MutL/HexB family.

This protein is involved in the repair of mismatches in DNA. It is required for dam-dependent methyl-directed DNA mismatch repair. May act as a 'molecular matchmaker', a protein that promotes the formation of a stable complex between two or more DNA-binding proteins in an ATP-dependent manner without itself being part of a final effector complex. This Pseudomonas entomophila (strain L48) protein is DNA mismatch repair protein MutL.